The following is a 154-amino-acid chain: Myoglobin (154 aa).

The 147-residue stretch at 2-148 (GLSDGEWQLV…FRNDMAAKYK (147 aa)) folds into the Globin domain. Residue S4 is modified to Phosphoserine. H65 is a binding site for nitrite. H65 contributes to the O2 binding site. The residue at position 68 (T68) is a Phosphothreonine. Residue H94 coordinates heme b.

The protein belongs to the globin family. In terms of assembly, monomeric.

It is found in the cytoplasm. The protein localises to the sarcoplasm. It carries out the reaction Fe(III)-heme b-[protein] + nitric oxide + H2O = Fe(II)-heme b-[protein] + nitrite + 2 H(+). The enzyme catalyses H2O2 + AH2 = A + 2 H2O. Its function is as follows. Monomeric heme protein which primary function is to store oxygen and facilitate its diffusion within muscle tissues. Reversibly binds oxygen through a pentacoordinated heme iron and enables its timely and efficient release as needed during periods of heightened demand. Depending on the oxidative conditions of tissues and cells, and in addition to its ability to bind oxygen, it also has a nitrite reductase activity whereby it regulates the production of bioactive nitric oxide. Under stress conditions, like hypoxia and anoxia, it also protects cells against reactive oxygen species thanks to its pseudoperoxidase activity. In Callithrix jacchus (White-tufted-ear marmoset), this protein is Myoglobin (MB).